A 307-amino-acid polypeptide reads, in one-letter code: 4-hydroxybenzoate geranyltransferase 1 (307 aa).

Transmembrane regions (helical) follow at residues 38-58 (PIGS…AADL), 62-82 (PKML…GCTI), 120-140 (LFIG…LAIV), 154-174 (ITYW…LLGS), 179-199 (GSVV…WTLV), 230-250 (MWIS…GLIL), 252-272 (IGLP…WQIF), and 286-306 (FVSN…GRLF).

This sequence belongs to the UbiA prenyltransferase family. The cofactor is Mg(2+). Expressed only in roots.

It is found in the endoplasmic reticulum membrane. The catalysed reaction is 4-hydroxybenzoate + (2E)-geranyl diphosphate = 3-geranyl-4-hydroxybenzoate + diphosphate. Functionally, prenyltransferase involved in the biosynthesis of shikonin, a naphthoquinone secondary metabolite. Could accept only geranyl diphosphate and not dimethylallyl diphosphate, farnesyl diphosphate, or geranylgeranyl diphosphate as substrate. The protein is 4-hydroxybenzoate geranyltransferase 1 (PGT-1) of Lithospermum erythrorhizon (Purple gromwell).